We begin with the raw amino-acid sequence, 294 residues long: FAD-dependent monooxygenase SAT1 (294 aa).

Asp108 contacts FAD.

This sequence belongs to the paxM FAD-dependent monooxygenase family. Requires FAD as cofactor.

The protein operates within mycotoxin biosynthesis. In terms of biological role, FAD-dependent monooxygenase; part of the satratoxin SC1 cluster involved in the biosynthesis of satratoxins, trichothecene mycotoxins that are associated with human food poisonings. Satratoxins are suggested to be made by products of multiple gene clusters (SC1, SC2 and SC3) that encode 21 proteins in all, including polyketide synthases, acetyltransferases, and other enzymes expected to modify the trichothecene skeleton. SC1 encodes 10 proteins, SAT1 to SAT10. The largest are SAT8, which encodes a putative polyketide synthase (PKS) with a conventional non-reducing architecture, and SAT10, a putative protein containing four ankyrin repeats and thus may be involved in protein scaffolding. The putative short-chain reductase SAT3 may assist the PKS in some capacity. SAT6 contains a secretory lipase domain and acts probably as a trichothecene esterase. SAT5 encodes a putative acetyltransferase, and so, with SAT6, may affect endogenous protection from toxicity. The probable transcription factor SAT9 may regulate the expression of the SC1 cluster. SC2 encodes proteins SAT11 to SAT16, the largest of which encodes the putative reducing PKS SAT13. SAT11 is a cytochrome P450 monooxygenase, while SAT14 and SAT16 are probable acetyltransferases. The SC2 cluster may be regulated by the transcription factor SAT15. SC3 is a small cluster that encodes 5 proteins, SAT17 to SAT21. SAT21 is a putative MFS-type transporter which may have a role in exporting secondary metabolites. The four other proteins putatively encoded in SC3 include the taurine hydroxylase-like protein SAT17, the O-methyltransferase SAT18, the acetyltransferase SAT19, and the Cys6-type zinc finger SAT20, the latter being probably involved in regulation of SC3 expression. The sequence is that of FAD-dependent monooxygenase SAT1 from Stachybotrys chartarum (strain CBS 109288 / IBT 7711) (Toxic black mold).